The following is a 344-amino-acid chain: tRNA N6-adenosine threonylcarbamoyltransferase (344 aa).

Residues histidine 111 and histidine 115 each contribute to the Fe cation site. Residues 134-138 (LVSGG), aspartate 167, glycine 180, and asparagine 273 each bind substrate. Residue aspartate 301 participates in Fe cation binding.

It belongs to the KAE1 / TsaD family. Fe(2+) serves as cofactor.

It localises to the cytoplasm. The catalysed reaction is L-threonylcarbamoyladenylate + adenosine(37) in tRNA = N(6)-L-threonylcarbamoyladenosine(37) in tRNA + AMP + H(+). Its function is as follows. Required for the formation of a threonylcarbamoyl group on adenosine at position 37 (t(6)A37) in tRNAs that read codons beginning with adenine. Is involved in the transfer of the threonylcarbamoyl moiety of threonylcarbamoyl-AMP (TC-AMP) to the N6 group of A37, together with TsaE and TsaB. TsaD likely plays a direct catalytic role in this reaction. This chain is tRNA N6-adenosine threonylcarbamoyltransferase, found in Cupriavidus taiwanensis (strain DSM 17343 / BCRC 17206 / CCUG 44338 / CIP 107171 / LMG 19424 / R1) (Ralstonia taiwanensis (strain LMG 19424)).